The following is a 360-amino-acid chain: NAD(P)H-quinone oxidoreductase subunit 1, chloroplastic (360 aa).

The next 9 membrane-spanning stretches (helical) occupy residues 27 to 47, 98 to 118, 129 to 149, 165 to 185, 203 to 223, 248 to 268, 269 to 289, 297 to 317, and 340 to 360; these read IWIFVPIFSLVLGIITGVLVI, FSIGPSIAVISILLSYSVIPF, IGIFLWIAISSIAPIGLLMSG, AAQSISYEIPLTLCVLSISLL, FWGWNLWRQPIGFIIFLISSL, YSGIKFGLFYVASYLNLLISS, LFVTVLYLGGWNISIPYISIL, IFGTTICIFITLAKTYLFLFI, and FLLPISLGNLLLTTSFQLFSL.

It belongs to the complex I subunit 1 family. In terms of assembly, NDH is composed of at least 16 different subunits, 5 of which are encoded in the nucleus.

It is found in the plastid. The protein resides in the chloroplast thylakoid membrane. The catalysed reaction is a plastoquinone + NADH + (n+1) H(+)(in) = a plastoquinol + NAD(+) + n H(+)(out). The enzyme catalyses a plastoquinone + NADPH + (n+1) H(+)(in) = a plastoquinol + NADP(+) + n H(+)(out). Functionally, NDH shuttles electrons from NAD(P)H:plastoquinone, via FMN and iron-sulfur (Fe-S) centers, to quinones in the photosynthetic chain and possibly in a chloroplast respiratory chain. The immediate electron acceptor for the enzyme in this species is believed to be plastoquinone. Couples the redox reaction to proton translocation, and thus conserves the redox energy in a proton gradient. The sequence is that of NAD(P)H-quinone oxidoreductase subunit 1, chloroplastic from Olimarabidopsis pumila (Dwarf rocket).